Reading from the N-terminus, the 511-residue chain is Spermatogenesis-associated protein 2 (511 aa).

One can recognise a PUB domain in the interval 77 to 149 (ALHCAFSMLE…AYKLKELVES (73 aa)). A PIM motif motif is present at residues 320 to 337 (TYFPTQDDVDLYTDSEPR).

The protein belongs to the SPATA2 family. Interacts (via the PIM motif) with RNF31/HOIP (via the PUB domain); the interaction is direct. Interacts (via the PUB domain) with CYLD; the interaction is direct. Expressed in the testis and to a lesser extent in the brain, while skeletal muscle and kidney show weak expression.

It is found in the cytoplasm. The protein localises to the nucleus. Functionally, bridging factor that mediates the recruitment of CYLD to the LUBAC complex, thereby regulating TNF-alpha-induced necroptosis. Acts as a direct binding intermediate that bridges RNF31/HOIP, the catalytic subunit of the LUBAC complex, and the deubiquitinase (CYLD), thereby recruiting CYLD to the TNF-R1 signaling complex (TNF-RSC). Required to activate the 'Met-1'- (linear) and 'Lys-63'-linked deubiquitinase activities of CYLD. Controls the kinase activity of RIPK1 and TNF-alpha-induced necroptosis by promoting 'Met-1'-linked deubiquitination of RIPK1 by CYLD. This is Spermatogenesis-associated protein 2 from Rattus norvegicus (Rat).